Reading from the N-terminus, the 124-residue chain is Large ribosomal subunit protein bL12 (124 aa).

This sequence belongs to the bacterial ribosomal protein bL12 family. Homodimer. Part of the ribosomal stalk of the 50S ribosomal subunit. Forms a multimeric L10(L12)X complex, where L10 forms an elongated spine to which 2 to 4 L12 dimers bind in a sequential fashion. Binds GTP-bound translation factors.

In terms of biological role, forms part of the ribosomal stalk which helps the ribosome interact with GTP-bound translation factors. Is thus essential for accurate translation. This chain is Large ribosomal subunit protein bL12, found in Xanthobacter autotrophicus (strain ATCC BAA-1158 / Py2).